Reading from the N-terminus, the 479-residue chain is MNTILAQQIANEGGVEAWMIAQQHKSLLRFLTCGSVDDGKSTLIGRLLHDTLQIYEDQLSSLHNDSKRHGTQGEKLDLALLVDGLQAEREQGITIDVAYRYFSTEKRKFIIADTPGHEQYTRNMATGASTCDLAILLIDARKGVLDQTRRHSFISTLLGVKHLVVAINKMDLVDYCEETFARIREDYLTFAEQLPGDLDIRFVPLSALEGDNVAAQSANMRWYSGPTLLEVLETVDIQRAVDRQPMRFPVQYVNRPNLDFRGYAGTLASGSVKVGERIKVLPSGVESSVARIVTFDGDKEEACAGEAITLVLNDDIDISRGDLLLAANETLAPARHAAIDVVWMAEQPLAPGQSYDVKLAGKKTRARIEAIRYQIDINNLTQRDVESLPLNGIGLVEMTFDEPLALDIYQQNPVTGGLIFIDRLSNVTVGAGMVRELDERGATPPVEYSAFELELNALVRRHFPHWDARDLLGDKHGAA.

The region spanning 25–239 (KSLLRFLTCG…EVLETVDIQR (215 aa)) is the tr-type G domain. Residues 34–41 (GSVDDGKS) form a G1 region. 34–41 (GSVDDGKS) serves as a coordination point for GTP. The tract at residues 92 to 96 (GITID) is G2. The tract at residues 113-116 (DTPG) is G3. GTP contacts are provided by residues 113–117 (DTPGH) and 168–171 (NKMD). The G4 stretch occupies residues 168–171 (NKMD). The G5 stretch occupies residues 206–208 (SAL).

Belongs to the TRAFAC class translation factor GTPase superfamily. Classic translation factor GTPase family. CysN/NodQ subfamily. As to quaternary structure, heterodimer composed of CysD, the smaller subunit, and CysN.

It catalyses the reaction sulfate + ATP + H(+) = adenosine 5'-phosphosulfate + diphosphate. The protein operates within sulfur metabolism; hydrogen sulfide biosynthesis; sulfite from sulfate: step 1/3. Its function is as follows. With CysD forms the ATP sulfurylase (ATPS) that catalyzes the adenylation of sulfate producing adenosine 5'-phosphosulfate (APS) and diphosphate, the first enzymatic step in sulfur assimilation pathway. APS synthesis involves the formation of a high-energy phosphoric-sulfuric acid anhydride bond driven by GTP hydrolysis by CysN coupled to ATP hydrolysis by CysD. This Salmonella gallinarum (strain 287/91 / NCTC 13346) protein is Sulfate adenylyltransferase subunit 1.